A 284-amino-acid polypeptide reads, in one-letter code: Asialoglycoprotein receptor 1 (284 aa).

The segment covering 1–18 (MTKDYQDFQHLDNDNDHH) has biased composition (basic and acidic residues). Positions 1 to 25 (MTKDYQDFQHLDNDNDHHQLRRGPP) are disordered. Over 1–39 (MTKDYQDFQHLDNDNDHHQLRRGPPPTPRLLQRLCSGSR) the chain is Cytoplasmic. The Endocytosis signal signature appears at 5-8 (YQDF). The S-palmitoyl cysteine moiety is linked to residue Cys-35. Residues 40 to 60 (LLLLSSSLSILLLVVVCVITS) form a helical; Signal-anchor for type II membrane protein membrane-spanning segment. The stretch at 59-117 (TSQNSQLREDLLALRQNFSNLTVSTEDQVKALSTQGSSVGRKMKLVESKLEKQQKDLTE) forms a coiled coil. The Extracellular segment spans residues 61-284 (QNSQLREDLL…VCETKLDKAN (224 aa)). N-linked (GlcNAc...) asparagine glycosylation is found at Asn-75, Asn-78, and Asn-146. Intrachain disulfides connect Cys-153–Cys-164, Cys-181–Cys-276, and Cys-254–Cys-268. Residues 160 to 277 (YEGSCYWFSS…CRRPYRWVCE (118 aa)) form the C-type lectin domain. 10 residues coordinate Ca(2+): Val-190, Glu-196, Asp-215, Gln-239, Asp-241, Glu-252, Asp-253, Asn-264, Asp-265, and Glu-277.

Interacts with LASS2. Phosphorylated on a cytoplasmic Ser residue. Expressed exclusively in hepatic parenchymal cells.

Its subcellular location is the membrane. In terms of biological role, mediates the endocytosis of plasma glycoproteins to which the terminal sialic acid residue on their complex carbohydrate moieties has been removed. The receptor recognizes terminal galactose and N-acetylgalactosamine units. After ligand binding to the receptor, the resulting complex is internalized and transported to a sorting organelle, where receptor and ligand are disassociated. The receptor then returns to the cell membrane surface. The chain is Asialoglycoprotein receptor 1 (Asgr1) from Mus musculus (Mouse).